The sequence spans 145 residues: Early nodulin-like protein 21 (145 aa).

The first 17 residues, 1 to 17, serve as a signal peptide directing secretion; the sequence is MFLWLVIVLTISASVSS. The Phytocyanin domain occupies 18 to 116; it reads YEHKLNWVVP…GQKMIVEVIS (99 aa). N-linked (GlcNAc...) asparagine glycosylation is found at asparagine 30 and asparagine 71. Residues cysteine 70 and cysteine 104 are joined by a disulfide bond. Residue serine 116 is the site of GPI-anchor amidated serine attachment. The propeptide at 117 to 145 is removed in mature form; that stretch reads RDHTTTSAAPPAAFAVLLCFFSLSLYFVA.

It belongs to the early nodulin-like (ENODL) family. In terms of tissue distribution, mostly expressed in leaves and flowers, and, to a lower extent, in roots and stems, but barely in seedlings and seeds.

It is found in the cell membrane. In terms of biological role, may act as a carbohydrate transporter. The polypeptide is Early nodulin-like protein 21 (Arabidopsis thaliana (Mouse-ear cress)).